Here is a 1589-residue protein sequence, read N- to C-terminus: Mediator of RNA polymerase II transcription subunit 23 (1589 aa).

The tract at residues 1381-1499 (YVSQNEPAPP…PPTPAPMHHQ (119 aa)) is disordered. Positions 1392–1410 (TPEREKTPERKDQQKEQQE) are enriched in basic and acidic residues. Residues 1457–1470 (LHHQQQQQQHLSQM) show a composition bias toward low complexity.

This sequence belongs to the Mediator complex subunit 23 family. In terms of assembly, component of the Mediator complex.

The protein localises to the nucleus. Functionally, component of the Mediator complex, a coactivator involved in the regulated transcription of nearly all RNA polymerase II-dependent genes. Mediator functions as a bridge to convey information from gene-specific regulatory proteins to the basal RNA polymerase II transcription machinery. Mediator is recruited to promoters by direct interactions with regulatory proteins and serves as a scaffold for the assembly of a functional preinitiation complex with RNA polymerase II and the general transcription factors. The protein is Mediator of RNA polymerase II transcription subunit 23 (sur-2) of Caenorhabditis briggsae.